Here is a 140-residue protein sequence, read N- to C-terminus: MSLEIPPEWKNFKYRGKSIDELLNMPMDEFIKLLPSRQRRSLKRGFTDAQRHLLEKVRKYRREGKFNKTIKTHVRNLVILPELIGLKMAVYNGKEFVEFTVTPEMIGHYLGEYSITTKKVEHGEPGLKATRSSLFLAMKG.

This sequence belongs to the universal ribosomal protein uS19 family.

In terms of biological role, protein S19 forms a complex with S13 that binds strongly to the 16S ribosomal RNA. In Saccharolobus solfataricus (strain ATCC 35092 / DSM 1617 / JCM 11322 / P2) (Sulfolobus solfataricus), this protein is Small ribosomal subunit protein uS19 (rps19).